The following is a 96-amino-acid chain: Alpha-elapitoxin-Al2b (96 aa).

A signal peptide spans 1-21; sequence MKTLLLTLVVVTIVCLDFGGG. 5 disulfide bridges follow: C24/C41, C34/C62, C47/C51, C66/C77, and C78/C83.

The protein belongs to the three-finger toxin family. Long-chain subfamily. Type II alpha-neurotoxin sub-subfamily. Expressed by the venom gland.

The protein localises to the secreted. Potent long-chain postsynaptic neurotoxin. Pseudo-irreversibly inhibits the nicotinic acetylcholine receptor through competitive antagonism. The chain is Alpha-elapitoxin-Al2b from Austrelaps labialis (Pygmy copperhead).